A 207-amino-acid chain; its full sequence is ATP-dependent Clp protease proteolytic subunit 2 (207 aa).

Residue serine 102 is the Nucleophile of the active site. The active site involves histidine 127.

It belongs to the peptidase S14 family. As to quaternary structure, fourteen ClpP subunits assemble into 2 heptameric rings which stack back to back to give a disk-like structure with a central cavity, resembling the structure of eukaryotic proteasomes.

The protein resides in the cytoplasm. The catalysed reaction is Hydrolysis of proteins to small peptides in the presence of ATP and magnesium. alpha-casein is the usual test substrate. In the absence of ATP, only oligopeptides shorter than five residues are hydrolyzed (such as succinyl-Leu-Tyr-|-NHMec, and Leu-Tyr-Leu-|-Tyr-Trp, in which cleavage of the -Tyr-|-Leu- and -Tyr-|-Trp bonds also occurs).. Its function is as follows. Cleaves peptides in various proteins in a process that requires ATP hydrolysis. Has a chymotrypsin-like activity. Plays a major role in the degradation of misfolded proteins. In Bifidobacterium longum (strain NCC 2705), this protein is ATP-dependent Clp protease proteolytic subunit 2.